We begin with the raw amino-acid sequence, 1002 residues long: Copper-transporting ATPase HMA5 (1002 aa).

Residues 32–48 (RPRYPSMPRRPRSAAVA) show a composition bias toward low complexity. The segment at 32–63 (RPRYPSMPRRPRSAAVAGEGGEGGGGGGDGDL) is disordered. The span at 49–60 (GEGGEGGGGGGD) shows a compositional bias: gly residues. HMA domains lie at 75–141 (KVAV…FEAK), 153–219 (LVCR…FEAI), and 228–294 (SRID…SGDL). Cu(+) is bound by residues cysteine 86, cysteine 89, cysteine 164, and cysteine 167. 8 helical membrane-spanning segments follow: residues 320–340 (FLWSLVFTIPVFLTSMVFMYI), 354–374 (MMSIGELLRWILSTPVQFVIG), 392–412 (MDVLIALGTNTAYFYSVYSIL), 425–445 (FFETSSMLISFILLGKYLEIL), 585–605 (VFVPLVIILSLLTWLAWFLAG), 624–644 (LALQFGISVMVIACPCALGLA), 943–963 (YVWALGYNIIGIPIAAGVLFP), and 972–992 (WVAGAAMAASSVSVVCWSLLL).

Belongs to the cation transport ATPase (P-type) (TC 3.A.3) family. Type IB subfamily. As to expression, expressed in root pericycle cells, xylem region of diffuse vascular bundles in the first node, and vascular tissues of peduncle, rachis and husk.

It localises to the cell membrane. It catalyses the reaction Cu(+)(in) + ATP + H2O = Cu(+)(out) + ADP + phosphate + H(+). In terms of biological role, copper (Cu) transporter that plays an essential role in promoting translocation of Cu from roots to shoots. Involved in loading Cu to the xylem of the roots and other organs, including panicles. The sequence is that of Copper-transporting ATPase HMA5 from Oryza sativa subsp. japonica (Rice).